The sequence spans 187 residues: Ethylene-responsive transcription factor ERF015 (187 aa).

The segment at residues 26–83 (CYRGVRKRSWGKWVSEIRVPKTGRRIWLGSYDAPEKAARAYDAALFCIRGEKGVYNFP) is a DNA-binding region (AP2/ERF).

This sequence belongs to the AP2/ERF transcription factor family. ERF subfamily.

It is found in the nucleus. Functionally, probably acts as a transcriptional activator. Binds to the GCC-box pathogenesis-related promoter element. May be involved in the regulation of gene expression by stress factors and by components of stress signal transduction pathways. The protein is Ethylene-responsive transcription factor ERF015 (ERF015) of Arabidopsis thaliana (Mouse-ear cress).